A 139-amino-acid polypeptide reads, in one-letter code: Putative pre-16S rRNA nuclease (139 aa).

Belongs to the YqgF nuclease family.

It is found in the cytoplasm. Functionally, could be a nuclease involved in processing of the 5'-end of pre-16S rRNA. The polypeptide is Putative pre-16S rRNA nuclease (Streptococcus pyogenes serotype M49 (strain NZ131)).